Reading from the N-terminus, the 308-residue chain is Methionyl-tRNA formyltransferase (308 aa).

110-113 (SLLP) serves as a coordination point for (6S)-5,6,7,8-tetrahydrofolate.

Belongs to the Fmt family.

The catalysed reaction is L-methionyl-tRNA(fMet) + (6R)-10-formyltetrahydrofolate = N-formyl-L-methionyl-tRNA(fMet) + (6S)-5,6,7,8-tetrahydrofolate + H(+). Functionally, attaches a formyl group to the free amino group of methionyl-tRNA(fMet). The formyl group appears to play a dual role in the initiator identity of N-formylmethionyl-tRNA by promoting its recognition by IF2 and preventing the misappropriation of this tRNA by the elongation apparatus. The sequence is that of Methionyl-tRNA formyltransferase from Neisseria meningitidis serogroup C (strain 053442).